We begin with the raw amino-acid sequence, 247 residues long: 3-deoxy-manno-octulosonate cytidylyltransferase (247 aa).

Belongs to the KdsB family.

The protein localises to the cytoplasm. It catalyses the reaction 3-deoxy-alpha-D-manno-oct-2-ulosonate + CTP = CMP-3-deoxy-beta-D-manno-octulosonate + diphosphate. The protein operates within nucleotide-sugar biosynthesis; CMP-3-deoxy-D-manno-octulosonate biosynthesis; CMP-3-deoxy-D-manno-octulosonate from 3-deoxy-D-manno-octulosonate and CTP: step 1/1. It participates in bacterial outer membrane biogenesis; lipopolysaccharide biosynthesis. Its function is as follows. Activates KDO (a required 8-carbon sugar) for incorporation into bacterial lipopolysaccharide in Gram-negative bacteria. The polypeptide is 3-deoxy-manno-octulosonate cytidylyltransferase (Pelodictyon phaeoclathratiforme (strain DSM 5477 / BU-1)).